A 746-amino-acid polypeptide reads, in one-letter code: Tudor domain-containing protein krimp (746 aa).

The interval 1–310 (MNLEDISMIM…RDIYNQILKD (310 aa)) is involved in homooligomerization. A non-canonical tudor domain region spans residues 311–489 (MAAFPENTIV…PAGITEDDMA (179 aa)). The C3H1-type zinc-finger motif lies at 511 to 540 (KDEQRICRHYDPKLNGCFKGNNCRFAHEPF). Positions 613–670 (KPRLLDIVLALYSDGCFYRAQIIDEFPSEYMIFYVDYGNTEFVPLSCLAPCENVDSFK) constitute a Tudor domain.

This sequence belongs to the Tudor domain containing protein family. In terms of assembly, homooligomerizes (via N-terminus). Component of the ping-pong piRNA processing (4P) complex consisting of krimp, aub and AGO3; a single molecule of krimp can bind both aub and AGO3 without the need for homooligomerization. Interacts (via canonical tudor domain) with aub (via N-terminus when symmetrically dimethylated on arginine residues). Interacts (via non-canonical tudor domain) with AGO3 (via N-terminus when unmethylated on arginine residues); this interaction leads to symmetrical dimethylation on AGO3 arginine residues and its subsequent dissociation from krimp. Krimp associated AGO3 is mostly free of piRNA binding and the interaction plays an important role in the loading of AGO3 with piRNAs; piRNA binding stimulates methylation of ACO3 by the csul/PRMT5 methylosome complex and promotes dissociation of the two proteins. In terms of tissue distribution, widely expressed in female germline cells, including differentiating germ cells in germarium and egg chambers (at protein level).

The protein localises to the cytoplasm. The protein resides in the perinuclear region. It is found in the cytoplasmic ribonucleoprotein granule. In terms of biological role, stable structural component of the perinuclear meiotic nuage, a germline-specific subcellular membraneless ribonucleoprotein compartment involved in production of transposable element-repressing Piwi-interacting RNA (piRNA)-induced silencing complexes (piRISCs), which are essential for maintaining germline integrity during oogenesis. Scaffold component of the ping-pong piRNA processing (4P) complex that recruits the Piwi proteins aub and AGO3 to specific subregions of the nuage where it coordinates their activity in the ping-pong amplification step of secondary piRNA biogenesis. Binds methylated aub, which is associated with piRNA, and unmethylated AGO3, which is not associated with piRNA, bringing the Piwi proteins into close proximity and facilitating the loading of freshly cut piRNAs generated by aub onto AGO3. Promotes asymmetric ping-pong amplification by aub and AGO3 to bias production towards antisense piRNAs capable of silencing transposable elements. Required for symmetrical dimethylation of AGO3, probably by recruitment to the nuage where methylosome components are located; dimethylation promotes AGO3 dissociation and interaction with other tudor-domain containing proteins such as tud. Required for the recruitment of mael to the perinuclear meiotic nuage. Required for the recruitment of aub to the nuage in testes but not in ovaries. Involved in repression of long interspersed nuclear elements (LINEs) including HeT-A, I-element LINEs and possibly mst40, but not TART LINEs. This Drosophila melanogaster (Fruit fly) protein is Tudor domain-containing protein krimp.